The following is an 859-amino-acid chain: Collagen alpha-1(II) chain (859 aa).

Positions 1–607 are disordered; that stretch reads LQGLPGKDGE…LGQTEKGPDP (607 aa). Residues P31 and P40 each carry the 4-hydroxyproline modification. 3-hydroxyproline is present on P42. P43 and P46 each carry 4-hydroxyproline. Residues 78–121 are compositionally biased toward low complexity; the sequence is ERGSPGAQGLQGPRGLPGTPGTDGPKGATGPAGPNGAQGPPGLQ. The span at 136–147 shows a compositional bias: basic and acidic residues; it reads KGDRGDVGEKGP. Low complexity-rich tracts occupy residues 204 to 220 and 249 to 277; these read PAGF…PGAK and PTGV…AGRV. 3-hydroxyproline is present on P279. Residues 279–292 show a composition bias toward pro residues; that stretch reads PPGPNGNPGPPGPP. A 4-hydroxyproline mark is found at P280, P286, and P292. Residues 306 to 321 are compositionally biased toward low complexity; the sequence is DAGPPGRAGDPGLQGP. Over residues 487–501 the composition is skewed to basic and acidic residues; that stretch reads RGDKGETGEAGERGL. The segment at 491–586 is triple-helical region; sequence GETGEAGERG…PGPPGPPGPP (96 aa). Position 516 is a 3-hydroxyproline (P516). Residues 520–529 show a composition bias toward low complexity; sequence SGDQGAAGPA. 4-hydroxyproline is present on P553. P558 is subject to 3-hydroxyproline. Position 559 is a 4-hydroxyproline (P559). Over residues 570-586 the composition is skewed to pro residues; sequence PAGPPGNPGPPGPPGPP. At P573 the chain carries 3-hydroxyproline. Residues P574 and P577 each carry the 4-hydroxyproline modification. The residue at position 579 (P579) is a 3-hydroxyproline. 4-hydroxyproline is present on residues P580 and P583. 3-hydroxyproline is present on P585. Position 586 is a 4-hydroxyproline (P586). The interval 587 to 613 is nonhelical region (C-terminal); the sequence is GTGIDMSAFAGLGQTEKGPDPIRYMRA. Residues 614 to 859 constitute a propeptide, C-terminal propeptide; sequence DEAAGGLRQH…GVDIGPVCFL (246 aa). The Fibrillar collagen NC1 domain maps to 625–859; sequence VEVDATLKSL…GVDIGPVCFL (235 aa). Disulfide bonds link C655-C687, C695-C857, and C765-C810. Residues D673, N675, Q676, C678, and D681 each coordinate Ca(2+). Residue N760 is glycosylated (N-linked (GlcNAc...) asparagine).

This sequence belongs to the fibrillar collagen family. In terms of assembly, homotrimers of alpha 1(II) chains. Post-translationally, contains mostly 4-hydroxyproline. Prolines at the third position of the tripeptide repeating unit (G-X-P) are 4-hydroxylated in some or all of the chains. Contains 3-hydroxyproline at a few sites. This modification occurs on the first proline residue in the sequence motif Gly-Pro-Hyp, where Hyp is 4-hydroxyproline. In terms of processing, lysine residues at the third position of the tripeptide repeating unit (G-X-Y) are 5-hydroxylated in some or all of the chains. Post-translationally, O-glycosylated on hydroxylated lysine residues. The O-linked glycan consists of a Glc-Gal disaccharide.

The protein resides in the secreted. Its subcellular location is the extracellular space. It localises to the extracellular matrix. Type II collagen is specific for cartilaginous tissues. It is essential for the normal embryonic development of the skeleton, for linear growth and for the ability of cartilage to resist compressive forces. The protein is Collagen alpha-1(II) chain of Gallus gallus (Chicken).